A 130-amino-acid polypeptide reads, in one-letter code: Small ribosomal subunit protein uS9 (130 aa).

Residues 107–130 (DARMKERKKPGLKKARKASQFSKR) form a disordered region. The segment covering 111–130 (KERKKPGLKKARKASQFSKR) has biased composition (basic residues).

Belongs to the universal ribosomal protein uS9 family.

The protein is Small ribosomal subunit protein uS9 of Ligilactobacillus salivarius (strain UCC118) (Lactobacillus salivarius).